The primary structure comprises 177 residues: Large ribosomal subunit protein uL6 (177 aa).

Belongs to the universal ribosomal protein uL6 family. Part of the 50S ribosomal subunit.

Its function is as follows. This protein binds to the 23S rRNA, and is important in its secondary structure. It is located near the subunit interface in the base of the L7/L12 stalk, and near the tRNA binding site of the peptidyltransferase center. The sequence is that of Large ribosomal subunit protein uL6 from Pseudomonas fluorescens (strain Pf0-1).